We begin with the raw amino-acid sequence, 396 residues long: Subtilisin-like protease 5 (396 aa).

An N-terminal signal peptide occupies residues 1–20 (MTGFFTILSFSLAALSVTNA). The propeptide occupies 21–116 (AQILSVPKGA…VEPDAIISQH (96 aa)). Positions 37–113 (YIVVMKDDTS…VAFVEPDAII (77 aa)) constitute an Inhibitor I9 domain. Asparagine 63 carries an N-linked (GlcNAc...) asparagine glycan. One can recognise a Peptidase S8 domain in the interval 125–396 (PWGLSRLSNR…TRLLYNGSGR (272 aa)). Residues aspartate 156 and histidine 187 each act as charge relay system in the active site. N-linked (GlcNAc...) asparagine glycosylation is found at asparagine 230 and asparagine 248. Serine 342 serves as the catalytic Charge relay system. A compositionally biased stretch (polar residues) spans 377-389 (TIRNPGPDTTTRL). The segment at 377 to 396 (TIRNPGPDTTTRLLYNGSGR) is disordered. A glycan (N-linked (GlcNAc...) asparagine) is linked at asparagine 392.

The protein belongs to the peptidase S8 family.

The protein resides in the secreted. Secreted subtilisin-like serine protease with keratinolytic activity that contributes to pathogenicity. This Arthroderma benhamiae (Trichophyton mentagrophytes) protein is Subtilisin-like protease 5 (SUB5).